A 193-amino-acid polypeptide reads, in one-letter code: DNA dC-&gt;dU-editing enzyme APOBEC-3H (193 aa).

The 103-residue stretch at 24-126 (YRRKTYLCYQ…WKYQQGLRHL (103 aa)) folds into the CMP/dCMP-type deaminase domain. Histidine 54 provides a ligand contact to Zn(2+). Glutamate 56 serves as the catalytic Proton donor. Positions 85 and 88 each coordinate Zn(2+).

This sequence belongs to the cytidine and deoxycytidylate deaminase family. Homodimer. It depends on Zn(2+) as a cofactor. Expressed in peripheral blood mononuclear cells.

It is found in the cytoplasm. It carries out the reaction a 2'-deoxycytidine in single-stranded DNA + H2O + H(+) = a 2'-deoxyuridine in single-stranded DNA + NH4(+). Functionally, DNA deaminase (cytidine deaminase) which acts as an inhibitor of retrovirus replication and retrotransposon mobility via deaminase-dependent and -independent mechanisms. Selectively targets single-stranded DNA and does not deaminate double-stranded DNA or single- or double-stranded RNA. Exhibits single-stranded DNA deaminase activity (in vitro). Incorporates into the released virions of the virion infectivity factor (vif)-deficient feline immunodeficiency virus (FIV) and suppresses FIV infectivity, probably in a deaminase-dependent manner (in vitro). Induces G-to-A hypermutations in vif-deficient FIV (in vitro). The APOBEC3H/APOBEC3Z3 haplotype 5 exhibits antiviral activity against vif-proficient FIV, strains Petaluma, C36 and Shizuoka (in vitro). Does not exhibit inhibitory activity against feline leukemia virus (FeLV), feline endogenous retrovirus (RD-114 virus) or a long interspersed nuclear element-1 (LINE-1) retrotransposon (in vitro). The sequence is that of DNA dC-&gt;dU-editing enzyme APOBEC-3H from Felis catus (Cat).